A 105-amino-acid polypeptide reads, in one-letter code: Large ribosomal subunit protein bL21 (105 aa).

This sequence belongs to the bacterial ribosomal protein bL21 family. In terms of assembly, part of the 50S ribosomal subunit. Contacts protein L20.

Functionally, this protein binds to 23S rRNA in the presence of protein L20. This is Large ribosomal subunit protein bL21 from Methylobacterium sp. (strain 4-46).